Consider the following 477-residue polypeptide: Multidrug resistance protein PmpM (477 aa).

12 consecutive transmembrane segments (helical) span residues 21-41 (LLTL…MGFV), 56-76 (AVAL…GTLL), 104-124 (LALL…EPIL), 133-153 (LIGP…AAAL), 171-191 (MVLG…LIYG), 202-222 (GCGW…LFWV), 253-273 (LPIG…ALLI), 286-306 (IALN…MAVT), 326-346 (GVGM…MLLL), 360-380 (VIAI…SDAL), 398-418 (MIMT…SLGL), and 431-451 (LWQG…IRLA).

The protein belongs to the multi antimicrobial extrusion (MATE) (TC 2.A.66.1) family.

It is found in the cell inner membrane. Multidrug efflux pump that functions as an H(+)/drug antiporter. Confers resistance to benzalkonium chloride, fluoroquinolones, ethidium bromide, acriflavine and tetraphenylphosphonium chloride. The sequence is that of Multidrug resistance protein PmpM (pmpM) from Pseudomonas aeruginosa (strain ATCC 15692 / DSM 22644 / CIP 104116 / JCM 14847 / LMG 12228 / 1C / PRS 101 / PAO1).